A 223-amino-acid chain; its full sequence is Probable chemoreceptor glutamine deamidase CheD (223 aa).

The tract at residues 189–223 (QTASAKAHTPPQIERFSAPAKPRFERFTRPSTATS) is disordered.

The protein belongs to the CheD family.

It catalyses the reaction L-glutaminyl-[protein] + H2O = L-glutamyl-[protein] + NH4(+). Its function is as follows. Probably deamidates glutamine residues to glutamate on methyl-accepting chemotaxis receptors (MCPs), playing an important role in chemotaxis. The protein is Probable chemoreceptor glutamine deamidase CheD of Bordetella petrii (strain ATCC BAA-461 / DSM 12804 / CCUG 43448).